The chain runs to 81 residues: Small ribosomal subunit protein bS18A (81 aa).

It belongs to the bacterial ribosomal protein bS18 family. As to quaternary structure, part of the 30S ribosomal subunit. Forms a tight heterodimer with protein bS6.

Its function is as follows. Binds as a heterodimer with protein bS6 to the central domain of the 16S rRNA, where it helps stabilize the platform of the 30S subunit. In Saccharopolyspora erythraea (strain ATCC 11635 / DSM 40517 / JCM 4748 / NBRC 13426 / NCIMB 8594 / NRRL 2338), this protein is Small ribosomal subunit protein bS18A.